A 965-amino-acid polypeptide reads, in one-letter code: Collagen alpha-1(I) chain (965 aa).

Residues 1–965 (GGISVPGPMG…PGPPGPPGPP (965 aa)) form a disordered region. 11 positions are modified to 4-hydroxyproline: P18, P21, P23, P32, P35, P38, P53, P68, P74, P83, and P89. Residues 26–44 (QGFQGPPGEPGEPGSSGPM) show a composition bias toward low complexity. Basic and acidic residues predominate over residues 56 to 70 (NGDDGEAGKPGRPGE). K92 carries the 5-hydroxylysine; alternate modification. An O-linked (Gal...) hydroxylysine; alternate glycan is attached at K92. S98 bears the Phosphoserine mark. The segment covering 106-122 (DAGPAGPKGEPGSPGEN) has biased composition (low complexity). 4-hydroxyproline is present on residues P116, P119, P125, P139, P160, P169, P172, P199, P202, P214, P220, P229, P235, P238, and P253. A compositionally biased stretch (low complexity) spans 139–157 (PGASGPAGARGNDGATGAA). Over residues 159–171 (PPGPTGPAGPPGF) the composition is skewed to pro residues. Residues 205–244 (AGAAGPAGNPGADGQPGAKGANGAPGIAGAPGFPGARGPS) are compositionally biased toward low complexity. Residue K256 is modified to 5-hydroxylysine. 8 positions are modified to 4-hydroxyproline: P262, P265, P269, P278, P293, P299, P308, and P314. The span at 303–312 (GERGGPGSRG) shows a compositional bias: gly residues. K323 carries the post-translational modification 5-hydroxylysine. A 4-hydroxyproline mark is found at P326, P332, P338, P347, P350, P359, P368, P374, P386, P395, P404, P407, P425, P442, P448, P454, P460, P466, P472, P484, P493, P506, P512, and P521. Positions 341-367 (KGLTGSPGSPGPDGKTGPPGPAGQDGR) are enriched in low complexity. Over residues 376–395 (ARGQAGVMGFPGPKGAAGEP) the composition is skewed to low complexity. Residues 454–463 (PGEAGKPGEQ) show a composition bias toward low complexity. K533 is subject to 5-hydroxylysine. P539, P554, and P560 each carry 4-hydroxyproline. Over residues 566-580 (SGPSGPAGPTGARGA) the composition is skewed to low complexity. The residue at position 569 (S569) is a Phosphoserine. Residues P581, P587, P590, P599, P605, P623, P632, and P641 each carry the 4-hydroxyproline modification. Over residues 593-620 (AGFAGPPGADGQPGAKGEPGDAGAKGDA) the composition is skewed to low complexity. The residue at position 644 (K644) is a 5-hydroxylysine. Low complexity predominate over residues 649–665 (SAGPPGATGFPGAAGRV). 4-hydroxyproline occurs at positions 653 and 659. P667 carries the 3-hydroxyproline modification. 4-hydroxyproline occurs at positions 668, 677, 680, 716, 725, 743, 752, 755, 761, 776, 782, 788, 796, and 802. Residues 710 to 725 (SGEKGSPGADGPAGAP) show a composition bias toward low complexity. Residues 775–785 (PPGPMGPPGLA) show a composition bias toward pro residues. K811 is modified (5-hydroxylysine). Residues P819, P822, and P825 each carry the 4-hydroxyproline modification. Pro residues predominate over residues 819 to 831 (PGAPGAPGAPGPV). Residues 851–865 (AGPAGARGPAGPQGP) are compositionally biased toward low complexity. The segment covering 866-880 (RGDKGETGEQGDRGI) has biased composition (basic and acidic residues). The residue at position 869 (K869) is a 5-hydroxylysine. K881 is subject to 5-hydroxylysine; alternate. Residue K881 is glycosylated (O-linked (Gal...) hydroxylysine; alternate). 4-hydroxyproline is present on residues P896, P899, P917, and P932. A compositionally biased stretch (low complexity) spans 899–932 (PGEQGPSGASGPAGPRGPPGSAGSPGKDGLNGLP). P937 is subject to 3-hydroxyproline. P938 bears the 4-hydroxyproline mark. Pro residues predominate over residues 950–965 (VGPPGPPGPPGPPGPP). P952 is modified (3-hydroxyproline). Position 953 is a 4-hydroxyproline (P953). The residue at position 955 (P955) is a 3-hydroxyproline. P956 carries the post-translational modification 4-hydroxyproline. P958 is modified (3-hydroxyproline). 4-hydroxyproline is present on residues P959, P962, and P965.

The protein belongs to the fibrillar collagen family. In terms of assembly, trimers of one alpha 2(I) and two alpha 1(I) chains. Contains mostly 4-hydroxyproline. Proline residues at the third position of the tripeptide repeating unit (G-X-Y) are hydroxylated in some or all of the chains. In terms of processing, contains 3-hydroxyproline at a few sites. This modification occurs on the first proline residue in the sequence motif Gly-Pro-Hyp, where Hyp is 4-hydroxyproline. Post-translationally, lysine residues at the third position of the tripeptide repeating unit (G-X-Y) are 5-hydroxylated in some or all of the chains. O-glycosylated on hydroxylated lysine residues. The O-linked glycan consists of a Glc-Gal disaccharide. As to expression, expressed in bones.

It is found in the secreted. The protein resides in the extracellular space. The protein localises to the extracellular matrix. Its function is as follows. Type I collagen is a member of group I collagen (fibrillar forming collagen). The protein is Collagen alpha-1(I) chain of Acratocnus sp. (strain SLP-2019) (Ground sloth).